Reading from the N-terminus, the 252-residue chain is RNA-binding protein 2 (252 aa).

Disordered stretches follow at residues 1 to 34 (MADG…PSGV) and 232 to 252 (RLQF…RGKR). One can recognise an RRM domain in the interval 152 to 238 (STLYVEGLPS…SYLRLQFSRS (87 aa)). The segment covering 242–252 (RSGGPGPRGKR) has biased composition (gly residues).

Probable RNA-binding protein. The polypeptide is RNA-binding protein 2 (Medicago truncatula (Barrel medic)).